We begin with the raw amino-acid sequence, 131 residues long: Profilin-2 (131 aa).

The protein belongs to the profilin family. In terms of assembly, occurs in many kinds of cells as a complex with monomeric actin in a 1:1 ratio.

It localises to the cytoplasm. The protein resides in the cytoskeleton. Functionally, binds to actin and affects the structure of the cytoskeleton. At high concentrations, profilin prevents the polymerization of actin, whereas it enhances it at low concentrations. By binding to PIP2, it inhibits the formation of IP3 and DG. This chain is Profilin-2, found in Malus domestica (Apple).